Here is a 1014-residue protein sequence, read N- to C-terminus: Disease resistance protein RGA4 (1014 aa).

Residues 1 to 182 are structured coiled coil (CC) domain; sequence MEAALLSGFI…PRIHEADLVG (182 aa). The stretch at 105–145 forms a coiled coil; the sequence is RTVRATKKLLQTNQHLAQELQRLKRMVEEANQRKQRYTAAA. The NB-ARC domain maps to 189–466; that stretch reads ELLEQLAERQ…WLAEGFVEPV (278 aa). LRR repeat units lie at residues 484 to 506, 507 to 530, 531 to 552, 580 to 602, 603 to 624, 625 to 647, 701 to 725, 762 to 784, 785 to 807, 808 to 833, and 854 to 877; these read RNII…TYGM, MREF…DKFL, PKYV…NFNG, LRVL…ICNL, VLLK…IAKL, KDLE…VFGL, MNKL…DLRE, PCYL…VTSL, RGLK…ALSN, LSYL…GFPR, and LPFL…KIEC.

Belongs to the disease resistance NB-LRR family. Expressed in leaves.

Probable disease resistance protein. Resistance proteins guard the plant against pathogens that contain an appropriate avirulence protein via an indirect interaction with this avirulence protein. That triggers a defense system including the hypersensitive response, which restricts the pathogen growth. At the opposite of cultivars Aichi asahi and Sasanishiki, the cultivars Nipponbare, Mokoto and Hitomebore don't recognize the effector avirulence protein AVR-Pia from M.oryzae. This Oryza sativa subsp. japonica (Rice) protein is Disease resistance protein RGA4.